We begin with the raw amino-acid sequence, 155 residues long: Microsomal glutathione S-transferase 1 (155 aa).

At 3–9 the chain is on the lumenal side; the sequence is DLTQVMD. A helical membrane pass occupies residues 10–33; that stretch reads DEVFMAFASYATIILSKMMLMSTA. The Cytoplasmic portion of the chain corresponds to 34–62; that stretch reads TAFYRLTRKVFANPEDCVAFGKGENAKKY. R38 serves as a coordination point for glutathione. An N6-acetyllysine mark is found at K42, K55, and K60. A helical transmembrane segment spans residues 63–96; it reads LRTDDRVERVRRAHLNDLENIIPFLGIGLLYSLS. Glutathione-binding residues include R73, R74, H76, and E81. At 97 to 99 the chain is on the lumenal side; that stretch reads GPD. Residues 100 to 123 form a helical membrane-spanning segment; that stretch reads PSTAILHFRLFVGARIYHTIAYLT. Y121 contacts glutathione. Residues 124-128 lie on the Cytoplasmic side of the membrane; it reads PLPQP. The chain crosses the membrane as a helical span at residues 129–148; the sequence is NRALSFFVGYGVTLSMAYRL. Over 149–155 the chain is Lumenal; it reads LKSKLYL.

The protein belongs to the MAPEG family. In terms of assembly, homotrimer; The trimer binds only one molecule of glutathione. In terms of tissue distribution, highly expressed in liver.

The protein localises to the endoplasmic reticulum membrane. It is found in the mitochondrion outer membrane. It carries out the reaction RX + glutathione = an S-substituted glutathione + a halide anion + H(+). Functionally, conjugation of reduced glutathione to a wide number of exogenous and endogenous hydrophobic electrophiles. The chain is Microsomal glutathione S-transferase 1 (MGST1) from Homo sapiens (Human).